A 95-amino-acid chain; its full sequence is Integration host factor subunit beta (95 aa).

Residues R56 to Y76 form a disordered region.

The protein belongs to the bacterial histone-like protein family. As to quaternary structure, heterodimer of an alpha and a beta chain.

Functionally, this protein is one of the two subunits of integration host factor, a specific DNA-binding protein that functions in genetic recombination as well as in transcriptional and translational control. The polypeptide is Integration host factor subunit beta (Shewanella woodyi (strain ATCC 51908 / MS32)).